Reading from the N-terminus, the 164-residue chain is MTEITFKGGPIHLKGQQINEGDFAPDFTVLDNDLNQVTLADYAGKKKLISVVPSIDTGVCDQQTRKFNSEASKEEGIVLTISADLPFAQKRWCASAGLDNVITLSDHRDLSFGENYGVVMEELRLLARAVFVLDVDNKVVYKEIVSEGTDFPDFDAALAAYKNI.

The Thioredoxin domain maps to 18 to 163 (INEGDFAPDF…FDAALAAYKN (146 aa)). Cysteine 60 acts as the Cysteine sulfenic acid (-SOH) intermediate in catalysis. Cysteines 60 and 93 form a disulfide.

The protein belongs to the peroxiredoxin family. Tpx subfamily. In terms of assembly, homodimer.

It catalyses the reaction a hydroperoxide + [thioredoxin]-dithiol = an alcohol + [thioredoxin]-disulfide + H2O. Thiol-specific peroxidase that catalyzes the reduction of hydrogen peroxide and organic hydroperoxides to water and alcohols, respectively. Plays a role in cell protection against oxidative stress by detoxifying peroxides. The sequence is that of Thiol peroxidase from Staphylococcus aureus (strain Mu50 / ATCC 700699).